Here is a 170-residue protein sequence, read N- to C-terminus: MKMEMGLVFLTVFMAVMSSTMVSAQSSCTNALISMSPCLNYITGNSTSPNQQCCNQLSRVVQSSPDCLCQVLNGGGSQLGINVNQTQALGLPRACNVQTPPVSRCNTGGGGGGSTSDSPAESPNSSGPGNGSKTVPVGEGDGPPSSDGSSIKFSFPLIAFFSAVSYMAIF.

The first 24 residues, 1–24 (MKMEMGLVFLTVFMAVMSSTMVSA), serve as a signal peptide directing secretion. Intrachain disulfides connect cysteine 28/cysteine 69, cysteine 38/cysteine 53, cysteine 54/cysteine 95, and cysteine 67/cysteine 105. N-linked (GlcNAc...) asparagine glycosylation is found at asparagine 45, asparagine 84, asparagine 124, and asparagine 130. Residues 105-148 (CNTGGGGGGSTSDSPAESPNSSGPGNGSKTVPVGEGDGPPSSDG) are disordered. The GPI-anchor amidated serine moiety is linked to residue serine 146. A propeptide spans 147–170 (DGSSIKFSFPLIAFFSAVSYMAIF) (removed in mature form).

It belongs to the plant LTP family. As to expression, expressed in seedlings, preferentially in the endodermis of hypocotyls and roots, as well as in anthers, sepals and flower tori.

Its subcellular location is the cell membrane. Functionally, lipid transfer protein involved in seed and ovule maturation and development, probably by regulating the fatty acids homeostasis during suberin and sporopollenin biosynthesis or deposition. Contributes to pre-invasive defense against some non-host powdery mildew pathogens by preventing the penetration of the epidermal cell wall by the fungal agents (e.g. Blumeria graminis f. sp. hordei (Bgh)). This is Non-specific lipid transfer protein GPI-anchored 5 from Arabidopsis thaliana (Mouse-ear cress).